Here is a 115-residue protein sequence, read N- to C-terminus: Macrophage migration inhibitory factor (115 aa).

The Proton acceptor; via imino nitrogen role is filled by proline 2. Positions 33 and 65 each coordinate substrate. Residue lysine 78 is modified to N6-acetyllysine; alternate. The residue at position 78 (lysine 78) is an N6-succinyllysine; alternate. Asparagine 98 contributes to the substrate binding site.

This sequence belongs to the MIF family. As to quaternary structure, homotrimer. Interacts with CXCR2 extracellular domain. Interacts with the CD74 extracellular domain, USO1, COPS5 and BNIPL.

Its subcellular location is the secreted. The protein resides in the cytoplasm. The catalysed reaction is 3-phenylpyruvate = enol-phenylpyruvate. It carries out the reaction L-dopachrome = 5,6-dihydroxyindole-2-carboxylate. Its function is as follows. Pro-inflammatory cytokine involved in the innate immune response to bacterial pathogens. The expression of MIF at sites of inflammation suggests a role as mediator in regulating the function of macrophages in host defense. Counteracts the anti-inflammatory activity of glucocorticoids. Has phenylpyruvate tautomerase and dopachrome tautomerase activity (in vitro), but the physiological substrate is not known. It is not clear whether the tautomerase activity has any physiological relevance, and whether it is important for cytokine activity. The protein is Macrophage migration inhibitory factor of Homo sapiens (Human).